Consider the following 794-residue polypeptide: Sucrose synthase (794 aa).

A GT-B glycosyltransferase region spans residues 263–742 (MISRLLILSP…ALDRVASRYT (480 aa)).

This sequence belongs to the glycosyltransferase 1 family. In terms of assembly, homotetramer.

It carries out the reaction an NDP-alpha-D-glucose + D-fructose = a ribonucleoside 5'-diphosphate + sucrose + H(+). The enzyme catalyses ADP-alpha-D-glucose + D-fructose = sucrose + ADP + H(+). With respect to regulation, inhibited by GDP over 10 mM and by over 2 mM MgCl(2). Its function is as follows. Catalyzes the reversible conversion of sucrose and a nucleotide disphosphate (NDP) into fructose and NDP-glucose; although the reaction is freely reversible in vitro, the physiological reaction seems to be sucrose cleavage. Unlike characterized plant enzymes prefers ADP as a cosubstrate, whereas plants prefer UDP. The KM for sucrose is 8-fold lower in the presence of ADP than UDP. Its preference for ADP over UDP suggests it may directly link sucrose and glycogen metabolism. This Nitrosomonas europaea (strain ATCC 19718 / CIP 103999 / KCTC 2705 / NBRC 14298) protein is Sucrose synthase (ss2).